A 389-amino-acid chain; its full sequence is Phosphoribosylformylglycinamidine cyclo-ligase, chloroplastic (389 aa).

A chloroplast-targeting transit peptide spans 1-58; it reads MEARILQSSSSCYSSLYAVNRSRFSSVSSPKPFSVSFAQTTRTRTRVLSMSKKDGRTD. The interval 46–65 is disordered; that stretch reads RVLSMSKKDGRTDKDDDTDS.

The protein belongs to the AIR synthase family.

Its subcellular location is the plastid. It localises to the chloroplast. It catalyses the reaction 2-formamido-N(1)-(5-O-phospho-beta-D-ribosyl)acetamidine + ATP = 5-amino-1-(5-phospho-beta-D-ribosyl)imidazole + ADP + phosphate + H(+). The protein operates within purine metabolism; IMP biosynthesis via de novo pathway; 5-amino-1-(5-phospho-D-ribosyl)imidazole from N(2)-formyl-N(1)-(5-phospho-D-ribosyl)glycinamide: step 2/2. This Arabidopsis thaliana (Mouse-ear cress) protein is Phosphoribosylformylglycinamidine cyclo-ligase, chloroplastic (PUR5).